A 699-amino-acid polypeptide reads, in one-letter code: MTAKPQKSCQFKRDYPQLINLYPPCALTTAQSLDNLTRLRLSRLTTQSTQPIQGLCVMGQWGLGDGLELLSLLQHWQTQTQTQGNTRLLVKVFEPNPINDYELKLLWDQSQSLISKSHLQPIANAILKAKPARIIGCQRLIFDDGRITVDLHFGDLHTALSQLPHSADHPIQQWLVLPHLAAQLNGKQVWQMARLSTDDAQLIGVNLAETLQQLAHKSGFSTLNVSQDALNGDASDALQSHIITDEILLHERKLLRQQADTAQAFTPKPTALATKDHPIAIVGGGLASANLMLSLAERGQSSTLFCKDNELGQGASGNRQGAIYPLLTPENDELSRFFQQAFLFSRRRIEALSHASMMETEAAPTITAISHDFCGVLQTGHDERSQQRLDKIIQSQDWPAEIAYAVDANEANEIAQIGIDKAGFFYPLGGWVCPFEYAKAAVDKASQLANVQCHFNTEITEIECDAKAWYLHSQGQRFGPFRQLVLANGAQLTQFSASERLQISPFRGQVSHVPAQFKLSQLATVLCANGYLTPSHQGLHCLGASYVKAAEHLDFCPQEQWENLGKMQESYPNQAWVDDIDISDNSARVGVRMVTRDHFPMMGCAPDVAEILARYEQHQLNQQQAEQSKHYWQTTPAPILDGLYILGGLGSRGLSSGPLAAECLAAQLTGEPLPLDWPTLNKLNPNRMWLRKLLKGKAL.

Residues 1 to 260 (MTAKPQKSCQ…ERKLLRQQAD (260 aa)) are tRNA (mnm(5)s(2)U34)-methyltransferase. The tract at residues 282–699 (VGGGLASANL…LRKLLKGKAL (418 aa)) is FAD-dependent cmnm(5)s(2)U34 oxidoreductase.

The protein in the N-terminal section; belongs to the methyltransferase superfamily. tRNA (mnm(5)s(2)U34)-methyltransferase family. In the C-terminal section; belongs to the DAO family. FAD is required as a cofactor.

It is found in the cytoplasm. It catalyses the reaction 5-aminomethyl-2-thiouridine(34) in tRNA + S-adenosyl-L-methionine = 5-methylaminomethyl-2-thiouridine(34) in tRNA + S-adenosyl-L-homocysteine + H(+). Its function is as follows. Catalyzes the last two steps in the biosynthesis of 5-methylaminomethyl-2-thiouridine (mnm(5)s(2)U) at the wobble position (U34) in tRNA. Catalyzes the FAD-dependent demodification of cmnm(5)s(2)U34 to nm(5)s(2)U34, followed by the transfer of a methyl group from S-adenosyl-L-methionine to nm(5)s(2)U34, to form mnm(5)s(2)U34. In Shewanella sp. (strain MR-4), this protein is tRNA 5-methylaminomethyl-2-thiouridine biosynthesis bifunctional protein MnmC.